We begin with the raw amino-acid sequence, 393 residues long: Putative bacilysin exporter BacE (393 aa).

10 consecutive transmembrane segments (helical) span residues leucine 11 to isoleucine 31, serine 43 to valine 63, valine 69 to leucine 89, glycine 92 to phenylalanine 112, leucine 133 to glycine 155, leucine 160 to serine 177, methionine 215 to valine 235, isoleucine 244 to valine 264, alanine 287 to isoleucine 307, and isoleucine 353 to histidine 373.

Belongs to the major facilitator superfamily.

Its subcellular location is the cell membrane. Part of the bacilysin biosynthesis operon. May be involved in self-resistance to bacilysin by permitting efflux of this antibiotic. This chain is Putative bacilysin exporter BacE (bacE), found in Bacillus subtilis.